The primary structure comprises 119 residues: Ribonuclease P protein component (119 aa).

It belongs to the RnpA family. Consists of a catalytic RNA component (M1 or rnpB) and a protein subunit.

It carries out the reaction Endonucleolytic cleavage of RNA, removing 5'-extranucleotides from tRNA precursor.. Functionally, RNaseP catalyzes the removal of the 5'-leader sequence from pre-tRNA to produce the mature 5'-terminus. It can also cleave other RNA substrates such as 4.5S RNA. The protein component plays an auxiliary but essential role in vivo by binding to the 5'-leader sequence and broadening the substrate specificity of the ribozyme. The polypeptide is Ribonuclease P protein component (Halalkalibacterium halodurans (strain ATCC BAA-125 / DSM 18197 / FERM 7344 / JCM 9153 / C-125) (Bacillus halodurans)).